A 512-amino-acid polypeptide reads, in one-letter code: Glutathione-binding protein GsiB (512 aa).

An N-terminal signal peptide occupies residues 1–26 (MARAVHRSGLVALGIVTALMASCAFA).

The protein belongs to the bacterial solute-binding protein 5 family. As to quaternary structure, the complex is composed of two ATP-binding proteins (GsiA), two transmembrane proteins (GsiC and GsiD) and a solute-binding protein (GsiB).

It is found in the periplasm. Part of the ABC transporter complex GsiABCD involved in glutathione import. Binds glutathione. This Shigella dysenteriae serotype 1 (strain Sd197) protein is Glutathione-binding protein GsiB.